We begin with the raw amino-acid sequence, 173 residues long: Crossover junction endodeoxyribonuclease RuvC (173 aa).

Residues aspartate 8, glutamate 67, and aspartate 139 contribute to the active site. 3 residues coordinate Mg(2+): aspartate 8, glutamate 67, and aspartate 139.

This sequence belongs to the RuvC family. As to quaternary structure, homodimer which binds Holliday junction (HJ) DNA. The HJ becomes 2-fold symmetrical on binding to RuvC with unstacked arms; it has a different conformation from HJ DNA in complex with RuvA. In the full resolvosome a probable DNA-RuvA(4)-RuvB(12)-RuvC(2) complex forms which resolves the HJ. Requires Mg(2+) as cofactor.

It localises to the cytoplasm. It catalyses the reaction Endonucleolytic cleavage at a junction such as a reciprocal single-stranded crossover between two homologous DNA duplexes (Holliday junction).. In terms of biological role, the RuvA-RuvB-RuvC complex processes Holliday junction (HJ) DNA during genetic recombination and DNA repair. Endonuclease that resolves HJ intermediates. Cleaves cruciform DNA by making single-stranded nicks across the HJ at symmetrical positions within the homologous arms, yielding a 5'-phosphate and a 3'-hydroxyl group; requires a central core of homology in the junction. The consensus cleavage sequence is 5'-(A/T)TT(C/G)-3'. Cleavage occurs on the 3'-side of the TT dinucleotide at the point of strand exchange. HJ branch migration catalyzed by RuvA-RuvB allows RuvC to scan DNA until it finds its consensus sequence, where it cleaves and resolves the cruciform DNA. The protein is Crossover junction endodeoxyribonuclease RuvC of Shewanella pealeana (strain ATCC 700345 / ANG-SQ1).